A 342-amino-acid chain; its full sequence is Polygalacturonase inhibitor 3 (342 aa).

A signal peptide spans 1-29; sequence MTQFNIPVTMSSSLSIILVILVSLRTALS. 2 disulfide bridges follow: C32–C62 and C63–C72. N-linked (GlcNAc...) asparagine glycosylation is present at N64. LRR repeat units follow at residues 82-107, 108-132, 133-156, 157-180, 181-205, 206-228, 229-252, 253-275, 276-299, and 300-319; these read NNLD…LPYL, NFLY…LTQL, HYLY…IKTL, VTLD…LPNL, VGIT…SKLF, TSMT…NLNL, AFVD…DKNT, QKIH…SKNL, NGLD…LKFL, and HSLN…GGNL. N-linked (GlcNAc...) asparagine glycosylation occurs at N141. N303 carries an N-linked (GlcNAc...) asparagine glycan. 2 cysteine pairs are disulfide-bonded: C310–C332 and C334–C341.

Belongs to the polygalacturonase-inhibiting protein family. As to expression, found in suspension-cultured cells and to a lesser extent in hypocotyls, leaves and flowers.

The protein resides in the secreted. Its subcellular location is the cell wall. The protein localises to the membrane. Inhibitor of fungal polygalacturonase. It is an important factor for plant resistance to phytopathogenic fungi. In Phaseolus vulgaris (Kidney bean), this protein is Polygalacturonase inhibitor 3 (PGIP3).